The sequence spans 365 residues: Histidinol-phosphate aminotransferase (365 aa).

Residue K221 is modified to N6-(pyridoxal phosphate)lysine.

It belongs to the class-II pyridoxal-phosphate-dependent aminotransferase family. Histidinol-phosphate aminotransferase subfamily. Homodimer. It depends on pyridoxal 5'-phosphate as a cofactor.

It carries out the reaction L-histidinol phosphate + 2-oxoglutarate = 3-(imidazol-4-yl)-2-oxopropyl phosphate + L-glutamate. It functions in the pathway amino-acid biosynthesis; L-histidine biosynthesis; L-histidine from 5-phospho-alpha-D-ribose 1-diphosphate: step 7/9. The polypeptide is Histidinol-phosphate aminotransferase (Nitrobacter hamburgensis (strain DSM 10229 / NCIMB 13809 / X14)).